The primary structure comprises 139 residues: Nucleoside diphosphate kinase (139 aa).

The ATP site is built by Lys-11, Phe-59, Arg-87, Thr-93, Arg-104, and Asn-114. The active-site Pros-phosphohistidine intermediate is His-117.

The protein belongs to the NDK family. As to quaternary structure, homotetramer. Mg(2+) is required as a cofactor.

The protein localises to the cytoplasm. The catalysed reaction is a 2'-deoxyribonucleoside 5'-diphosphate + ATP = a 2'-deoxyribonucleoside 5'-triphosphate + ADP. It carries out the reaction a ribonucleoside 5'-diphosphate + ATP = a ribonucleoside 5'-triphosphate + ADP. Functionally, major role in the synthesis of nucleoside triphosphates other than ATP. The ATP gamma phosphate is transferred to the NDP beta phosphate via a ping-pong mechanism, using a phosphorylated active-site intermediate. This chain is Nucleoside diphosphate kinase, found in Wolbachia sp. subsp. Drosophila simulans (strain wRi).